A 133-amino-acid polypeptide reads, in one-letter code: Ribosomal silencing factor RsfS (133 aa).

Belongs to the Iojap/RsfS family. Interacts with ribosomal protein uL14 (rplN).

Its subcellular location is the cytoplasm. In terms of biological role, functions as a ribosomal silencing factor. Interacts with ribosomal protein uL14 (rplN), blocking formation of intersubunit bridge B8. Prevents association of the 30S and 50S ribosomal subunits and the formation of functional ribosomes, thus repressing translation. This Zymomonas mobilis subsp. mobilis (strain ATCC 31821 / ZM4 / CP4) protein is Ribosomal silencing factor RsfS.